We begin with the raw amino-acid sequence, 260 residues long: Phosphate import ATP-binding protein PstB (260 aa).

The ABC transporter domain occupies M13 to I255. Position 45 to 52 (G45 to S52) interacts with ATP.

This sequence belongs to the ABC transporter superfamily. Phosphate importer (TC 3.A.1.7) family. In terms of assembly, the complex is composed of two ATP-binding proteins (PstB), two transmembrane proteins (PstC and PstA) and a solute-binding protein (PstS).

Its subcellular location is the cell inner membrane. It catalyses the reaction phosphate(out) + ATP + H2O = ADP + 2 phosphate(in) + H(+). In terms of biological role, part of the ABC transporter complex PstSACB involved in phosphate import. Responsible for energy coupling to the transport system. The polypeptide is Phosphate import ATP-binding protein PstB (Sphingopyxis alaskensis (strain DSM 13593 / LMG 18877 / RB2256) (Sphingomonas alaskensis)).